The chain runs to 730 residues: 1,4-alpha-glucan branching enzyme GlgB (730 aa).

Asp405 functions as the Nucleophile in the catalytic mechanism. Glu458 functions as the Proton donor in the catalytic mechanism.

This sequence belongs to the glycosyl hydrolase 13 family. GlgB subfamily. In terms of assembly, monomer.

It catalyses the reaction Transfers a segment of a (1-&gt;4)-alpha-D-glucan chain to a primary hydroxy group in a similar glucan chain.. It participates in glycan biosynthesis; glycogen biosynthesis. Catalyzes the formation of the alpha-1,6-glucosidic linkages in glycogen by scission of a 1,4-alpha-linked oligosaccharide from growing alpha-1,4-glucan chains and the subsequent attachment of the oligosaccharide to the alpha-1,6 position. This Haemophilus influenzae (strain PittGG) protein is 1,4-alpha-glucan branching enzyme GlgB.